A 374-amino-acid polypeptide reads, in one-letter code: Multicilin (374 aa).

Residues 164-212 (EQYWRDVADHNQKALGDALVENNQLQVSLTEKQEEIVSLKEKNIQLNEL) adopt a coiled-coil conformation. The segment at 230-260 (RTKQNSGATQGRLPVKRSLEDFYPQSNEPDS) is disordered. The TIRT domain stretch occupies residues 330-374 (TDLEDVSFRTSIKEHSTIRTLAFPQGNAFTIRTSGGGYKFRWVPN).

It belongs to the geminin family. As to quaternary structure, component of the EDM complex, at least composed of e2f4, e2f5, mcidas and tfdp1. Expressed in multiciliate differentiating cells. Expression is lost by stage 26, when multiciliate cells in the skin are fully differentiated, but is then detected in the developing nephrostomes of the kidneys where multiciliate cells form at later stages.

It is found in the nucleus. In terms of biological role, transcription regulator specifically required for multiciliate cell differentiation. Acts in a multiprotein complex containing E2F4 and E2F5 that binds and activates genes required for centriole biogenesis. Activates genes required for centriole assembly (plk4, cep152) and genes specifically required for motile cilia formation (foxj1). Also promotes the deuterosome pathway of centriole biogenesis by activating expression of ccdc67/deup1, but not its paralog cep63. This Xenopus laevis (African clawed frog) protein is Multicilin (mcidas).